Here is a 1435-residue protein sequence, read N- to C-terminus: DNA polymerase III PolC-type (1435 aa).

Residues 420-576 (YVVFDVETTG…YDTEATGYLL (157 aa)) enclose the Exonuclease domain.

It belongs to the DNA polymerase type-C family. PolC subfamily.

The protein resides in the cytoplasm. It catalyses the reaction DNA(n) + a 2'-deoxyribonucleoside 5'-triphosphate = DNA(n+1) + diphosphate. Required for replicative DNA synthesis. This DNA polymerase also exhibits 3' to 5' exonuclease activity. The sequence is that of DNA polymerase III PolC-type from Bacillus cereus (strain ATCC 14579 / DSM 31 / CCUG 7414 / JCM 2152 / NBRC 15305 / NCIMB 9373 / NCTC 2599 / NRRL B-3711).